Consider the following 237-residue polypeptide: Probable transcriptional regulatory protein Bpro_2928 (237 aa).

This sequence belongs to the TACO1 family.

It localises to the cytoplasm. This Polaromonas sp. (strain JS666 / ATCC BAA-500) protein is Probable transcriptional regulatory protein Bpro_2928.